A 373-amino-acid chain; its full sequence is G protein-coupled receptor 137Ba (373 aa).

The Lumenal portion of the chain corresponds to 1–15 (MQKDSLPTLSPAVPP). A helical membrane pass occupies residues 16–36 (YVMLGLTVAYTIFYCLLFVFV). The Cytoplasmic segment spans residues 37-55 (YVQLWLVLRYRHKRFSYQT). Residues 56-76 (VFLFLCLLWAALRALLFSFYF) traverse the membrane as a helical segment. Residues 77–84 (KNCVTANT) are Lumenal-facing. Residues 85 to 105 (LGPFCFWLLYCFPVCLQFFTL) form a helical membrane-spanning segment. The Cytoplasmic segment spans residues 106–135 (SLMNLYFAQVIFKAKSKYSPELQKYRLPLY). A helical transmembrane segment spans residues 136–156 (LLFLSISLLFLLVNLTCALLV). Over 157–176 (KINRANTETVVLVRVTVNDS) the chain is Lumenal. A helical membrane pass occupies residues 177-197 (LFVLCAVSLSLCLYRIAKMSL). The Cytoplasmic portion of the chain corresponds to 198 to 213 (ANIYLEAKGTSVCQVT). A helical transmembrane segment spans residues 214-234 (LIGVTVVLLYSSRACYNLVVL). Residues 235 to 268 (ALTKIKSINSFDYDWYNVSDQADLKSTLGDAGYV) lie on the Lumenal side of the membrane. Residues 269-289 (VFGVILFVWELLPTSLVVYFF) form a helical membrane-spanning segment. Over 290 to 373 (RVRKPTLDRS…HLAPEELNPY (84 aa)) the chain is Cytoplasmic.

Belongs to the GPR137 family.

The protein resides in the lysosome membrane. In terms of biological role, lysosomal integral membrane protein that regulates the localization and activity of mTORC1, a signaling complex promoting cell growth in response to growth factors, energy levels, and amino acids. Interacts with Rag GTPases and increases the lysosomial localization and activity of Rag GTPases and thereby regulates mTORC1 translocation and activity in lysosome. Also acts as a negative regulator of osteoclast activity. May be involved in interleukin-4-induced M2 macrophage polarization. Functionally, also acts as a negative regulator of osteoclast activity. May be involved in interleukin-4-induced M2 macrophage polarization. This chain is G protein-coupled receptor 137Ba, found in Danio rerio (Zebrafish).